The sequence spans 279 residues: MQQPMNYPCPQIFWVDSSATSSWAPPGSVFPCPSCGPRGPDQRRPPPPPPPVSPLPPPSQPLPLPPLTPLKKKDHNTNLWLPVVFFMVLVALVGMGLGMYQLFHLQKELAELREFTNQSLKVSSFEKQIANPSTPSEKKEPRSVAHLTGNPHSRSIPLEWEDTYGTALISGVKYKKGGLVINETGLYFVYSKVYFRGQSCNNQPLNHKVYMRNSKYPEDLVLMEEKRLNYCTTGQIWAHSSYLGAVFNLTSADHLYVNISQLSLINFEESKTFFGLYKL.

The Cytoplasmic portion of the chain corresponds to 1 to 78; it reads MQQPMNYPCP…PLKKKDHNTN (78 aa). The interval 30-70 is disordered; it reads FPCPSCGPRGPDQRRPPPPPPPVSPLPPPSQPLPLPPLTPL. Residues 45–68 are compositionally biased toward pro residues; sequence PPPPPPPVSPLPPPSQPLPLPPLT. Residues 79–100 form a helical; Signal-anchor for type II membrane protein membrane-spanning segment; that stretch reads LWLPVVFFMVLVALVGMGLGMY. Over 101-279 the chain is Extracellular; it reads QLFHLQKELA…SKTFFGLYKL (179 aa). The N-linked (GlcNAc...) asparagine glycan is linked to asparagine 117. The segment covering 126–135 has biased composition (polar residues); that stretch reads EKQIANPSTP. The disordered stretch occupies residues 126 to 150; it reads EKQIANPSTPSEKKEPRSVAHLTGN. The THD domain occupies 143-279; sequence SVAHLTGNPH…SKTFFGLYKL (137 aa). An N-linked (GlcNAc...) asparagine glycan is attached at asparagine 182. A disulfide bridge connects residues cysteine 200 and cysteine 231. Residues asparagine 248 and asparagine 258 are each glycosylated (N-linked (GlcNAc...) asparagine).

Belongs to the tumor necrosis factor family. In terms of assembly, homotrimer. Interacts with ARHGAP9, BAIAP2L1, BTK, CACNB3, CACNB4, CRK, DLG2, DNMBP, DOCK4, EPS8L3, FGR, FYB1, FYN, HCK, ITK, ITSN2, KALRN, LYN, MACC1, MIA, MPP4, MYO15A, NCF1, NCK1, NCK2, NCKIPSD, OSTF1, PIK3R1, PSTPIP1, RIMBP3C, SAMSN1, SH3GL3, SH3PXD2B, SH3PXD2A, SH3RF2, SKAP2, SNX33, SNX9, SORBS3, SPTA1, SRC, SRGAP1, SRGAP2, SRGAP3, TEC, TJP3 and YES1. The soluble form derives from the membrane form by proteolytic processing. The membrane-bound form undergoes two successive intramembrane proteolytic cleavages. The first one is processed by ADAM10 producing an N-terminal fragment, which lacks the receptor-binding extracellular domain. This ADAM10-processed FasL (FAsL APL) remnant form is still membrane anchored and further processed by SPPL2A that liberates the FasL intracellular domain (FasL ICD). FasL shedding by ADAM10 is a prerequisite for subsequent intramembrane cleavage by SPPL2A in T-cells. In terms of processing, phosphorylated by FGR on tyrosine residues; this is required for ubiquitination and subsequent internalization. Post-translationally, N-glycosylated. Glycosylation enhances apoptotic activity. Monoubiquitinated. Expressed in T-cells. Expressed in natural killer cells.

The protein resides in the cell membrane. The protein localises to the cytoplasmic vesicle lumen. Its subcellular location is the lysosome lumen. It is found in the secreted. It localises to the nucleus. Functionally, cytokine that binds to TNFRSF6/FAS, a receptor that transduces the apoptotic signal into cells. Involved in cytotoxic T-cell-mediated apoptosis, natural killer cell-mediated apoptosis and in T-cell development. Initiates fratricidal/suicidal activation-induced cell death (AICD) in antigen-activated T-cells contributing to the termination of immune responses. TNFRSF6/FAS-mediated apoptosis also has a role in the induction of peripheral tolerance. Binds to TNFRSF6B/DcR3, a decoy receptor that blocks apoptosis. In terms of biological role, induces FAS-mediated activation of NF-kappa-B, initiating non-apoptotic signaling pathways. Can induce apoptosis but does not appear to be essential for this process. Cytoplasmic form induces gene transcription inhibition. The sequence is that of Tumor necrosis factor ligand superfamily member 6 (Faslg) from Mus musculus (Mouse).